A 296-amino-acid chain; its full sequence is Urease accessory protein UreD (296 aa).

It belongs to the UreD family. As to quaternary structure, ureD, UreF and UreG form a complex that acts as a GTP-hydrolysis-dependent molecular chaperone, activating the urease apoprotein by helping to assemble the nickel containing metallocenter of UreC. The UreE protein probably delivers the nickel.

Its subcellular location is the cytoplasm. Its function is as follows. Required for maturation of urease via the functional incorporation of the urease nickel metallocenter. The sequence is that of Urease accessory protein UreD from Nitrosococcus oceani (strain ATCC 19707 / BCRC 17464 / JCM 30415 / NCIMB 11848 / C-107).